A 351-amino-acid polypeptide reads, in one-letter code: UDP-N-acetylglucosamine--N-acetylmuramyl-(pentapeptide) pyrophosphoryl-undecaprenol N-acetylglucosamine transferase (351 aa).

UDP-N-acetyl-alpha-D-glucosamine contacts are provided by residues Thr12–Gly14, Asn124, Arg160, Ser188, Ile239, Ala258–Glu263, and Gln283.

Belongs to the glycosyltransferase 28 family. MurG subfamily.

Its subcellular location is the cell inner membrane. The catalysed reaction is di-trans,octa-cis-undecaprenyl diphospho-N-acetyl-alpha-D-muramoyl-L-alanyl-D-glutamyl-meso-2,6-diaminopimeloyl-D-alanyl-D-alanine + UDP-N-acetyl-alpha-D-glucosamine = di-trans,octa-cis-undecaprenyl diphospho-[N-acetyl-alpha-D-glucosaminyl-(1-&gt;4)]-N-acetyl-alpha-D-muramoyl-L-alanyl-D-glutamyl-meso-2,6-diaminopimeloyl-D-alanyl-D-alanine + UDP + H(+). Its pathway is cell wall biogenesis; peptidoglycan biosynthesis. In terms of biological role, cell wall formation. Catalyzes the transfer of a GlcNAc subunit on undecaprenyl-pyrophosphoryl-MurNAc-pentapeptide (lipid intermediate I) to form undecaprenyl-pyrophosphoryl-MurNAc-(pentapeptide)GlcNAc (lipid intermediate II). The polypeptide is UDP-N-acetylglucosamine--N-acetylmuramyl-(pentapeptide) pyrophosphoryl-undecaprenol N-acetylglucosamine transferase (Actinobacillus pleuropneumoniae serotype 7 (strain AP76)).